The sequence spans 310 residues: Protein YIP5 (310 aa).

The disordered stretch occupies residues 1-84 (MPSNNSSFLD…VIGQNDNDGL (84 aa)). Residues 10-22 (DIDDDLEGVDDFG) show a composition bias toward acidic residues. Residues 35–57 (DSPNMNNSTAGKGSEFYNTTGSK) show a composition bias toward polar residues. Serine 60 is subject to Phosphoserine. 5 consecutive transmembrane segments (helical) span residues 131–151 (TDLY…FTMS), 181–201 (LHSI…TMQV), 220–240 (LISV…ILNI), 249–269 (TVQA…SYFL), and 290–310 (SIIV…FIIF).

The protein belongs to the YIP1 family. Interacts with SNX3, TVP18, TVP23, YIP1 and YIP4. Interacts with SEC4; The C-terminal cysteines in the Rab GTPase SEC4 are essential for the interaction. Interacts with YPT1, YPT6, YPT7, YPT10, YPT11, YPT31, YPT32 and YPT52; These proteins are all Rab GTPases.

The protein localises to the membrane. In terms of biological role, possible role in vesicle-mediated transport. May be involved in proper membrane localization of Rab GTPases. The chain is Protein YIP5 (YIP5) from Saccharomyces cerevisiae (strain ATCC 204508 / S288c) (Baker's yeast).